Consider the following 278-residue polypeptide: Putative pyruvate, phosphate dikinase regulatory protein (278 aa).

156-163 provides a ligand contact to ADP; it reads GVSRTSKT.

The protein belongs to the pyruvate, phosphate/water dikinase regulatory protein family. PDRP subfamily.

It carries out the reaction N(tele)-phospho-L-histidyl/L-threonyl-[pyruvate, phosphate dikinase] + ADP = N(tele)-phospho-L-histidyl/O-phospho-L-threonyl-[pyruvate, phosphate dikinase] + AMP + H(+). The catalysed reaction is N(tele)-phospho-L-histidyl/O-phospho-L-threonyl-[pyruvate, phosphate dikinase] + phosphate + H(+) = N(tele)-phospho-L-histidyl/L-threonyl-[pyruvate, phosphate dikinase] + diphosphate. Functionally, bifunctional serine/threonine kinase and phosphorylase involved in the regulation of the pyruvate, phosphate dikinase (PPDK) by catalyzing its phosphorylation/dephosphorylation. The protein is Putative pyruvate, phosphate dikinase regulatory protein of Lactobacillus acidophilus (strain ATCC 700396 / NCK56 / N2 / NCFM).